The chain runs to 132 residues: Small ribosomal subunit protein uS8 (132 aa).

This sequence belongs to the universal ribosomal protein uS8 family. As to quaternary structure, part of the 30S ribosomal subunit. Contacts proteins S5 and S12.

Its function is as follows. One of the primary rRNA binding proteins, it binds directly to 16S rRNA central domain where it helps coordinate assembly of the platform of the 30S subunit. In Brevibacillus brevis (strain 47 / JCM 6285 / NBRC 100599), this protein is Small ribosomal subunit protein uS8.